Reading from the N-terminus, the 527-residue chain is MSENIRVSEVSDILRQQLEGIETKVQLDEIGTVLQVSDGVVRIYGLRNAEANELLEFDNGIKAIVMNLEEDNVGAVLLGPTDKIKEGFTVKRTKRIASIRVGESMLGRVIDPLGEPLDGKGLIGGELYEMPLERKAPGVIYRQPVNQPLQTGLKAVDAMIPIGRGQRELIIGDRQTGKTSIAIDTIINQRSNYEAGDPVYCIYVAIGQKGSTVASIVNTLRQYGAMDYTIVVAATAGDPAALQYFAPFAGAAIGEYFRDTGRHALVVYDDLSKQAVSYREVSLILRRPSGREAYPGDIFYLHSRLLERAAKIINQEEVAREMNDLPESLKGKVKGGGSLTALPIIETQAGDVSAYIPTNVISITDGQIFLDTDLFNQGNRPAINVGISVSRVGGNAQIKAMKKVAGTLKIDQAQYRELEAFSKFSGDMDPVTALTIDKGQKNARLLVQPQYSPMPVEKQIAILYCGIHGLLRNVPLDKVEDFEAAFLNTLALDHQADVLDVLKTGVINDEVTKAIEETAAMVAKQYS.

Residue 172 to 179 (GDRQTGKT) coordinates ATP.

The protein belongs to the ATPase alpha/beta chains family. In terms of assembly, F-type ATPases have 2 components, CF(1) - the catalytic core - and CF(0) - the membrane proton channel. CF(1) has five subunits: alpha(3), beta(3), gamma(1), delta(1), epsilon(1). CF(0) has three main subunits: a(1), b(2) and c(9-12). The alpha and beta chains form an alternating ring which encloses part of the gamma chain. CF(1) is attached to CF(0) by a central stalk formed by the gamma and epsilon chains, while a peripheral stalk is formed by the delta and b chains.

The protein localises to the cell inner membrane. The catalysed reaction is ATP + H2O + 4 H(+)(in) = ADP + phosphate + 5 H(+)(out). Produces ATP from ADP in the presence of a proton gradient across the membrane. The alpha chain is a regulatory subunit. The protein is ATP synthase subunit alpha of Bacteroides fragilis (strain ATCC 25285 / DSM 2151 / CCUG 4856 / JCM 11019 / LMG 10263 / NCTC 9343 / Onslow / VPI 2553 / EN-2).